The primary structure comprises 467 residues: Cytochrome P450 85A3 (467 aa).

Residues 2–22 (AIFLIIFVVFFGFCILSTPLF) traverse the membrane as a helical segment. Residue Cys417 coordinates heme.

The protein belongs to the cytochrome P450 family. Heme is required as a cofactor. In terms of tissue distribution, expressed in fruits.

The protein resides in the membrane. It carries out the reaction 6-deoxocastasterone + reduced [NADPH--hemoprotein reductase] + O2 = 6alpha-hydroxycastasterone + oxidized [NADPH--hemoprotein reductase] + H2O + H(+). The enzyme catalyses 6alpha-hydroxycastasterone + reduced [NADPH--hemoprotein reductase] + O2 = castasterone + oxidized [NADPH--hemoprotein reductase] + 2 H2O + H(+). The catalysed reaction is castasterone + reduced [NADPH--hemoprotein reductase] + O2 = brassinolide + oxidized [NADPH--hemoprotein reductase] + H2O + H(+). It catalyses the reaction 6-deoxocastasterone + 2 reduced [NADPH--hemoprotein reductase] + 2 O2 = castasterone + 2 oxidized [NADPH--hemoprotein reductase] + 3 H2O + 2 H(+). The protein operates within plant hormone biosynthesis; brassinosteroid biosynthesis. Its function is as follows. Catalyzes the C6-oxidation step in brassinosteroids biosynthesis. Converts 6-deoxocastasterone (6-deoxoCS) to castasterone (CS), and castasterone (CS) to brassinolide (BL). This is Cytochrome P450 85A3 from Solanum lycopersicum (Tomato).